Reading from the N-terminus, the 194-residue chain is Small ribosomal subunit protein uS7 (194 aa).

The protein belongs to the universal ribosomal protein uS7 family. In terms of assembly, part of the 30S ribosomal subunit.

One of the primary rRNA binding proteins, it binds directly to 16S rRNA where it nucleates assembly of the head domain of the 30S subunit. Is located at the subunit interface close to the decoding center. The protein is Small ribosomal subunit protein uS7 of Methanocorpusculum labreanum (strain ATCC 43576 / DSM 4855 / Z).